Reading from the N-terminus, the 172-residue chain is Adenine phosphoribosyltransferase (172 aa).

It belongs to the purine/pyrimidine phosphoribosyltransferase family. Homodimer.

It localises to the cytoplasm. It catalyses the reaction AMP + diphosphate = 5-phospho-alpha-D-ribose 1-diphosphate + adenine. It participates in purine metabolism; AMP biosynthesis via salvage pathway; AMP from adenine: step 1/1. In terms of biological role, catalyzes a salvage reaction resulting in the formation of AMP, that is energically less costly than de novo synthesis. The chain is Adenine phosphoribosyltransferase from Synechococcus sp. (strain CC9605).